Consider the following 333-residue polypeptide: MNDILNKEPMEEDYGIEKSLRPQFFNQYIGQDKVKEQLEIFIKAAKMREEVLDHVLLFGPPGLGKTTMAFVIANELGVNIKQTAGPAIEKPGDLVAILNELEPGDVLFIDEIHRMPMQVEEVLYSAMEDFYIDIMLGSGDGSRSVHLDLPPFTLVGATTRAGMLSNPLRARFGISSHMEYYQERDLEEIVKRTADIFEVEVIDNAALEIALRSRGTPRIANRLLKRVRDFAQIMGDGRVDKAITDKALSILDVDAAGLDYIDQKILRTMIEMYHGGPVGIGTLAVNIAEDRETVEDMYEPYLIQKGFLMRTKQGRKVTQRAYEHLGYVYNEED.

A large ATPase domain (RuvB-L) region spans residues 1–181; sequence MNDILNKEPM…FGISSHMEYY (181 aa). Residues L20, R21, G62, K65, T66, T67, 128–130, R171, Y181, and R218 each bind ATP; that span reads EDF. Residue T66 participates in Mg(2+) binding. The small ATPAse domain (RuvB-S) stretch occupies residues 182–252; it reads QERDLEEIVK…ITDKALSILD (71 aa). Residues 255 to 333 form a head domain (RuvB-H) region; that stretch reads AAGLDYIDQK…HLGYVYNEED (79 aa). Positions 291, 310, and 315 each coordinate DNA.

It belongs to the RuvB family. As to quaternary structure, homohexamer. Forms an RuvA(8)-RuvB(12)-Holliday junction (HJ) complex. HJ DNA is sandwiched between 2 RuvA tetramers; dsDNA enters through RuvA and exits via RuvB. An RuvB hexamer assembles on each DNA strand where it exits the tetramer. Each RuvB hexamer is contacted by two RuvA subunits (via domain III) on 2 adjacent RuvB subunits; this complex drives branch migration. In the full resolvosome a probable DNA-RuvA(4)-RuvB(12)-RuvC(2) complex forms which resolves the HJ.

It localises to the cytoplasm. The catalysed reaction is ATP + H2O = ADP + phosphate + H(+). The RuvA-RuvB-RuvC complex processes Holliday junction (HJ) DNA during genetic recombination and DNA repair, while the RuvA-RuvB complex plays an important role in the rescue of blocked DNA replication forks via replication fork reversal (RFR). RuvA specifically binds to HJ cruciform DNA, conferring on it an open structure. The RuvB hexamer acts as an ATP-dependent pump, pulling dsDNA into and through the RuvAB complex. RuvB forms 2 homohexamers on either side of HJ DNA bound by 1 or 2 RuvA tetramers; 4 subunits per hexamer contact DNA at a time. Coordinated motions by a converter formed by DNA-disengaged RuvB subunits stimulates ATP hydrolysis and nucleotide exchange. Immobilization of the converter enables RuvB to convert the ATP-contained energy into a lever motion, pulling 2 nucleotides of DNA out of the RuvA tetramer per ATP hydrolyzed, thus driving DNA branch migration. The RuvB motors rotate together with the DNA substrate, which together with the progressing nucleotide cycle form the mechanistic basis for DNA recombination by continuous HJ branch migration. Branch migration allows RuvC to scan DNA until it finds its consensus sequence, where it cleaves and resolves cruciform DNA. The protein is Holliday junction branch migration complex subunit RuvB of Lactococcus lactis subsp. lactis (strain IL1403) (Streptococcus lactis).